We begin with the raw amino-acid sequence, 361 residues long: 4-oxalomesaconate tautomerase (361 aa).

The protein belongs to the PrpF family.

It carries out the reaction (1E)-4-oxobut-1-ene-1,2,4-tricarboxylate = 4-carboxy-2-hydroxy-cis,cis-muconate. Its function is as follows. Catalyzes the tautomerization of the 4-oxalomesaconic acid keto (OMAketo) generated by GalA dioxygenase to 4-oxalomesaconic acid enol (OMAenol). Mediates the second step in gallate degradation pathway. This chain is 4-oxalomesaconate tautomerase (galD), found in Pseudomonas putida (strain ATCC 47054 / DSM 6125 / CFBP 8728 / NCIMB 11950 / KT2440).